Here is a 250-residue protein sequence, read N- to C-terminus: Phosphoribosylaminoimidazole-succinocarboxamide synthase (250 aa).

The protein belongs to the SAICAR synthetase family.

It catalyses the reaction 5-amino-1-(5-phospho-D-ribosyl)imidazole-4-carboxylate + L-aspartate + ATP = (2S)-2-[5-amino-1-(5-phospho-beta-D-ribosyl)imidazole-4-carboxamido]succinate + ADP + phosphate + 2 H(+). The protein operates within purine metabolism; IMP biosynthesis via de novo pathway; 5-amino-1-(5-phospho-D-ribosyl)imidazole-4-carboxamide from 5-amino-1-(5-phospho-D-ribosyl)imidazole-4-carboxylate: step 1/2. This chain is Phosphoribosylaminoimidazole-succinocarboxamide synthase, found in Synechococcus sp. (strain CC9605).